The chain runs to 323 residues: tRNA U34 carboxymethyltransferase (323 aa).

Residues lysine 91, tryptophan 105, lysine 110, glycine 130, isoleucine 181–glutamate 182, methionine 196, tyrosine 200, and arginine 315 each bind carboxy-S-adenosyl-L-methionine.

Belongs to the class I-like SAM-binding methyltransferase superfamily. CmoB family. In terms of assembly, homotetramer.

The enzyme catalyses carboxy-S-adenosyl-L-methionine + 5-hydroxyuridine(34) in tRNA = 5-carboxymethoxyuridine(34) in tRNA + S-adenosyl-L-homocysteine + H(+). Catalyzes carboxymethyl transfer from carboxy-S-adenosyl-L-methionine (Cx-SAM) to 5-hydroxyuridine (ho5U) to form 5-carboxymethoxyuridine (cmo5U) at position 34 in tRNAs. This is tRNA U34 carboxymethyltransferase from Yersinia pestis bv. Antiqua (strain Antiqua).